We begin with the raw amino-acid sequence, 315 residues long: Protein sprouty homolog 2 (315 aa).

The span at 1-15 shows a compositional bias: polar residues; that stretch reads MEARAQSGNGSQPLL. The tract at residues 1 to 140 is disordered; it reads MEARAQSGNG…SEQRLLGSSF (140 aa). Over residues 20–32 the composition is skewed to basic and acidic residues; it reads DGGRPRGEPDPRD. The span at 108-140 shows a compositional bias: low complexity; the sequence is SRSISTVSSGSRSSTRTSTSSSSSEQRLLGSSF. Positions 118–315 are required for interaction with CAV1; that stretch reads SRSSTRTSTS…VPRRNFEKPT (198 aa). The SPR domain occupies 177-291; sequence RCEDCGKCKC…CYDRVNRPGC (115 aa). Residues 178-315 form a required for interaction with TESK1 region; that stretch reads CEDCGKCKCK…VPRRNFEKPT (138 aa).

The protein belongs to the sprouty family. Forms heterodimers with SPRY1. Forms a tripartite complex containing GAB1, METTL13 and SPRY2. Within the complex interacts with METTL13. Interacts with RAF1. Interacts (via C-terminus) with TESK1 (via C-terminus); the interaction disrupts SPRY2 interaction with GRB2, potentially via disruption of SPRY2 serine dephosphorylation. Interacts with PPP2R1A/PP2A-A and PPP2CA/PP2A-C; the interaction with PPP2CA/PP2A-C is inhibited by interaction with TESK1, possibly by vesicular sequestration of SPRY2. Inhibition of the interaction with the serine/threonine-protein phosphatase 2A (PP2A) holoenzyme results in loss of PP2A-mediated dephosphorylation, resulting in the loss of SPRY2 interaction with GRB2. Interacts with GRB2. Interacts with CBL/C-CBL; the interaction inhibits CBL-mediated ubiquitination of EGFR. Interacts (via C-terminus) with CAV1 (via C-terminus). In terms of processing, cleaved at Pro-144 by the prolyl endopeptidase FAP (seprase) activity (in vitro).

It localises to the cytoplasm. The protein localises to the cytoskeleton. The protein resides in the cell projection. Its subcellular location is the ruffle membrane. Functionally, antagonist of fibroblast growth factor (FGF) pathways via inhibition of FGF-mediated phosphorylation of ERK1/2. Thereby acts as an antagonist of FGF-induced retinal lens fiber differentiation, may inhibit limb bud outgrowth and may negatively modulate respiratory organogenesis. Inhibits TGFB-induced epithelial-to-mesenchymal transition in retinal lens epithelial cells. Inhibits CBL/C-CBL-mediated EGFR ubiquitination. This is Protein sprouty homolog 2 (SPRY2) from Pongo abelii (Sumatran orangutan).